Reading from the N-terminus, the 31-residue chain is L-amino-acid oxidase (31 aa).

Belongs to the flavin monoamine oxidase family. FIG1 subfamily. Homodimer; non-covalently linked. FAD is required as a cofactor. N-glycosylated. Expressed by the venom gland.

The protein localises to the secreted. It catalyses the reaction an L-alpha-amino acid + O2 + H2O = a 2-oxocarboxylate + H2O2 + NH4(+). The catalysed reaction is L-leucine + O2 + H2O = 4-methyl-2-oxopentanoate + H2O2 + NH4(+). It carries out the reaction L-phenylalanine + O2 + H2O = 3-phenylpyruvate + H2O2 + NH4(+). The enzyme catalyses L-histidine + O2 + H2O = 3-(imidazol-5-yl)pyruvate + H2O2 + NH4(+). In terms of biological role, catalyzes an oxidative deamination of predominantly hydrophobic and aromatic L-amino acids, thus producing hydrogen peroxide that may contribute to the diverse toxic effects of this enzyme. Is moderately active on L-Leu, L-His, and L-Phe, and very weakly active on L-Thr, and L-Cys. Exhibits diverse biological activities, such as hemorrhage, hemolysis, edema, antibacterial and antiparasitic activities, as well as regulation of platelet aggregation. Its effect on platelets is controversial, since it either induces aggregation or inhibits agonist-induced aggregation. These different effects are probably due to different experimental conditions. Inhibits growth of B.subtilis strain ATCC 6633 (MIC=32 uM), E.faecalis strain ATCC 12953 (MIC=32 uM), S.aureus strain ATCC 29213 (MIC=32 uM), S.pyogenes strain ATCC 19615 (MIC=8 uM), E.coli strain ATCC 8739 (MIC=4 uM), K.pneumoniae strain ATCC 13885 (MIC=2 uM), P.mirabilis strain ATCC 25933 (MIC=2 uM), P.aeruginosa strain ATCC 15442 (MIC=8 uM) and S.typhimurium strain ATCC 14028 (MIC=8 uM). The sequence is that of L-amino-acid oxidase from Bothrops mattogrossensis (Pitviper).